A 331-amino-acid chain; its full sequence is Probable deacetylase MTH_1194 (331 aa).

The active-site Proton donor/acceptor is the His-118. 3 residues coordinate Zn(2+): Asp-155, His-157, and Asp-244.

It belongs to the histone deacetylase family. It depends on Zn(2+) as a cofactor.

Its function is as follows. Probable deacetylase. This chain is Probable deacetylase MTH_1194, found in Methanothermobacter thermautotrophicus (strain ATCC 29096 / DSM 1053 / JCM 10044 / NBRC 100330 / Delta H) (Methanobacterium thermoautotrophicum).